We begin with the raw amino-acid sequence, 617 residues long: MAQTERRDAPELPDFSLLKRLARDQLIFLLEQLPGKKDLFIDADLMSPLDRIANVTILKQHEVDKLYKVELKPIVSSSDQLCFLIRPRIQTVKWISDLVNSDKVAGRFRRYKIIFTPQKFYACETVLEEQGVYGDVTTDEWNFYILPLDDDILSLELPEFFRDNFLEGDQRWVTTGGGALHLLQSVYGSFSKVYGIGRCAKMVYESWRELMEEGEQRTRQPEFAKVFLIDRDVDFVTPLCSQVVYEGLVDDIFRIKCSSVEFGPDVTSSDKSIKVMLNSQDKVFNEIRNEHFSNVFGFLSQKAKNLQTAYDKRRGMDIQQMKAFVADELKGLKQEHRLLSLHIGASESIMKKKTKQDFQELLKTEHSLLEGFEIRECIAYIEEHINRQVSMIDSLRLLCLLSITENGLLSKDYRSLKAQYLQSYGIEHLLTFANLRQLGLLEEQQTGETLTVMESKVGKLVNDKTAGKLTDAFSSLAKKSNFRALSKRLALVPKSGEEYDLRVPRDMAYIFSGAYIPLSCKLIEQVLERDGWTGLEEVTRMLNGQDFAVTGGSSSSEARNKSNGQRIILVMFLGGCTYSEISALRFLGKERGCRFIVLTTAITNSGRLLEALLDKHV.

It belongs to the STXBP/unc-18/SEC1 family. As to quaternary structure, interacts with vipas39. Widely expressed from 4 hours post-fertilization (hpf) to 24 hpf. At 48 hpf, localized to brain, retina, ear, liver and proximal intestine. This expression pattern is more pronounced at 72 hpf and persists through 5 days post-fertilization (dpf). At 3 dpf and 4 dpf, expression in the liver is predominantly in developing biliary epithelial cells. No expression detected in kidney or spinal cord.

The protein localises to the late endosome membrane. Its subcellular location is the lysosome membrane. Its function is as follows. May play a role in vesicle-mediated protein trafficking to lysosomal compartments and in membrane docking/fusion reactions of late endosomes/lysosomes. Required for proper trafficking and targeting of the collagen-modifying enzyme lysyl hydroxylase 3 (LH3) to intracellular collagen. Mediates phagolysosomal fusion in macrophages. Proposed to be involved in endosomal maturation implicating vipas39. In epithelial cells, the vps33b:vipas39 complex may play a role in the apical recycling pathway and in the maintenance of the apical-basolateral polarity. Plays a role in bile duct development. The sequence is that of Vacuolar protein sorting-associated protein 33B from Danio rerio (Zebrafish).